The primary structure comprises 228 residues: Glutamate transport system permease protein GluC (228 aa).

The next 5 helical transmembrane spans lie at 16–36 (FWVT…FGTI), 64–84 (LTLV…LTLA), 100–120 (AVLG…RSGI), 145–165 (IIFP…LIAL), and 195–215 (LFVV…PMGL). An ABC transmembrane type-1 domain is found at 16–217 (FWVTIKLTIY…ILTLPMGLGL (202 aa)).

The protein belongs to the binding-protein-dependent transport system permease family. HisMQ subfamily. As to quaternary structure, the complex is composed of two ATP-binding proteins (GluA), two transmembrane proteins (GluC and GluD) and a solute-binding protein (GluB).

The protein resides in the cell membrane. Part of the ABC transporter complex GluABCD involved in glutamate uptake. Probably responsible for the translocation of the substrate across the membrane. The polypeptide is Glutamate transport system permease protein GluC (Corynebacterium glutamicum (strain ATCC 13032 / DSM 20300 / JCM 1318 / BCRC 11384 / CCUG 27702 / LMG 3730 / NBRC 12168 / NCIMB 10025 / NRRL B-2784 / 534)).